The following is a 143-amino-acid chain: NADH-quinone oxidoreductase subunit A (143 aa).

3 helical membrane passes run 8–28, 63–83, and 93–113; these read FGNVFVFFLLGVVFVAGGYLT, FYVVALIFIIFDVEVVFLFPW, and FALVEALVFAGILILGLVYAW.

This sequence belongs to the complex I subunit 3 family. NDH-1 is composed of 14 different subunits. Subunits NuoA, H, J, K, L, M, N constitute the membrane sector of the complex.

Its subcellular location is the cell inner membrane. The catalysed reaction is a quinone + NADH + 5 H(+)(in) = a quinol + NAD(+) + 4 H(+)(out). Functionally, NDH-1 shuttles electrons from NADH, via FMN and iron-sulfur (Fe-S) centers, to quinones in the respiratory chain. The immediate electron acceptor for the enzyme in this species is believed to be a menaquinone. Couples the redox reaction to proton translocation (for every two electrons transferred, four hydrogen ions are translocated across the cytoplasmic membrane), and thus conserves the redox energy in a proton gradient. In Chlorobium phaeovibrioides (strain DSM 265 / 1930) (Prosthecochloris vibrioformis (strain DSM 265)), this protein is NADH-quinone oxidoreductase subunit A.